Consider the following 231-residue polypeptide: Superoxide dismutase [Mn] 1, mitochondrial (231 aa).

A mitochondrion-targeting transit peptide spans 1-29 (MAIRCVASRKTLAGLKETSSRLLRIRGIQ). Mn(2+) is bound by residues histidine 55 and histidine 103. The residue at position 124 (serine 124) is a Phosphoserine. Mn(2+)-binding residues include aspartate 192 and histidine 196.

Belongs to the iron/manganese superoxide dismutase family. Homotetramer. The cofactor is Mn(2+).

Its subcellular location is the mitochondrion matrix. It carries out the reaction 2 superoxide + 2 H(+) = H2O2 + O2. Activated by MTM1. Destroys superoxide anion radicals which are normally produced within the cells and which are toxic to biological systems. In Arabidopsis thaliana (Mouse-ear cress), this protein is Superoxide dismutase [Mn] 1, mitochondrial (MSD1).